Consider the following 509-residue polypeptide: Circadian clock oscillator protein KaiC (509 aa).

KaiC domains follow at residues 1-243 and 257-509; these read MKDK…IIVF and IRIS…IEKN. The ATP site is built by glycine 45, threonine 46, glycine 47, lysine 48, threonine 49, serine 85, lysine 220, leucine 221, arginine 222, threonine 224, histidine 226, aspartate 237, threonine 286, glycine 287, threonine 288, glycine 289, lysine 290, and threonine 291. Residue threonine 49 participates in Mg(2+) binding. The Mg(2+) site is built by threonine 291 and glutamate 314. Position 327 (tryptophan 327) interacts with ATP. Serine 427 carries the post-translational modification Phosphoserine; by autocatalysis. Phosphothreonine; by autocatalysis is present on threonine 428. Residues arginine 447, lysine 453, methionine 454, arginine 455, serine 457, histidine 459, and lysine 461 each contribute to the ATP site.

Belongs to the KaiC family. Homohexamer; hexamerization is dependent on ATP-binding. Component of the KaiBC complex. KaiC interacts with SasA, activating its autokinase function and leading to RpaA activation. Mg(2+) serves as cofactor. In terms of processing, phosphorylated on serine and threonine residues by autocatalysis. Has a 4 step phosphorylation cycle; the autokinase acts first on Thr-428, then Ser-427. When Ser-427 is modified KaiC switches to an autophosphatase mode, acting first on phospho-Thr-428 then phospho-Ser-427.

It carries out the reaction L-seryl-[protein] + ATP = O-phospho-L-seryl-[protein] + ADP + H(+). It catalyses the reaction L-threonyl-[protein] + ATP = O-phospho-L-threonyl-[protein] + ADP + H(+). The enzyme catalyses ATP + H2O = ADP + phosphate + H(+). Its function is as follows. Central component of the KaiBC oscillator complex, which constitutes the main circadian regulator in cyanobacteria. Its composition changes during the circadian cycle to control KaiC phosphorylation. Autophosphorylates and has a weak ATPase activity; ATPase activity defines the circadian period. The sequence is that of Circadian clock oscillator protein KaiC from Prochlorococcus marinus subsp. pastoris (strain CCMP1986 / NIES-2087 / MED4).